The following is a 576-amino-acid chain: MDEQIIFCDGFEVVPSPEINDLILYECDQSLTNSEVTTDEEEDTIFSGGDSSSGLAAEEDSSGDKPLSFYIVKQPVYDNPEIKAKIDEANQEIFRCNELRINVLSAKKSELAEVSSLYTQMESLVPQSEGYRMVIEEKKKEFDTLLEALRNLRCTTSDQLCFTKEELDHLSYIAQYQIEYGSIGLEEEDWMLKETEKPDGIILSEKEASINRVKSMALELNEVKNELDAITWKINDLSDKLWKSQNNIRVLDLEKAHILEKRDRFYARIKMLRIQRDKGNAAFFQSLSVMCKAKELAASGNVRELEVFASSEVDRFMTLWNDDKAFREDYVRRISHSLCERELNEDGRIKDADLQIFWEKKVPVKTIKRSEKVHKMNREDSSSNSSEDGNVITDKRKKETKSDVIVYEKPKKKEEEIDEEALKERKREEQLEKARLVMERKRKLQEKAAAKAAIRAQKEAEKKLKAIILSCSHFFNECEKKAKKKAAANSTSPSESDQVINDEKVRTLAVSGKEKHQKERLLFPKQRSFRYKHRGSGTEALPKAILNRRKARRYWVWGLSSAALAVSLVLVVLLLR.

Residues 34–63 (SEVTTDEEEDTIFSGGDSSSGLAAEEDSSG) are disordered. Coiled coils occupy residues 132 to 155 (RMVI…LRCT) and 205 to 241 (EKEA…SDKL). The span at 369–381 (RSEKVHKMNREDS) shows a compositional bias: basic and acidic residues. Residues 369–395 (RSEKVHKMNREDSSSNSSEDGNVITDK) form a disordered region. Positions 411-467 (KKKEEEIDEEALKERKREEQLEKARLVMERKRKLQEKAAAKAAIRAQKEAEKKLKAI) form a coiled coil. A helical membrane pass occupies residues 555 to 575 (WVWGLSSAALAVSLVLVVLLL).

Belongs to the plant Proton pump-interactor protein family.

It localises to the cell membrane. The protein resides in the endoplasmic reticulum membrane. Functionally, may regulate plasma membrane ATPase activity. This Arabidopsis thaliana (Mouse-ear cress) protein is Proton pump-interactor 3B (PPI3B).